Here is a 147-residue protein sequence, read N- to C-terminus: Protein OPG060 (147 aa).

It belongs to the orthopoxvirus OPG058 family.

The sequence is that of Protein OPG060 (OPG060) from Bos taurus (Bovine).